We begin with the raw amino-acid sequence, 94 residues long: Late cornified envelope-like proline-rich protein 1 (94 aa).

2 disordered regions span residues 1–26 (MSSD…CEQK) and 47–94 (CPRE…PPPE). Residues 53–94 (PAPPKCPPCPSPSPSSCPPKPCAKPCPPKCPSSCPPPCPPPE) show a composition bias toward pro residues.

It belongs to the cornifin (SPRR) family.

The protein is Late cornified envelope-like proline-rich protein 1 (LELP1) of Macaca fascicularis (Crab-eating macaque).